The following is a 387-amino-acid chain: Penicillopepsin-1 (387 aa).

The N-terminal stretch at 1 to 19 is a signal peptide; that stretch reads MVNSKTVVSALALSALAAA. The propeptide at 20-66 is activation peptide; it reads APAPSSTTSFSINQVAVKKPAIHPAVKYAKALAKYHAEIPSNVASAA. One can recognise a Peptidase A1 domain in the interval 85 to 384; it reads YVTPITAGSS…DGDNLQLGFA (300 aa). Active-site residues include Asp-101 and Asp-279. The N-linked (GlcNAc...) asparagine glycan is linked to Asn-304. Residues Cys-315 and Cys-347 are joined by a disulfide bond.

Belongs to the peptidase A1 family. In terms of assembly, monomer.

It is found in the secreted. It catalyses the reaction Hydrolysis of proteins with broad specificity similar to that of pepsin A, preferring hydrophobic residues at P1 and P1', but also cleaving 20-Gly-|-Glu-21 in the B chain of insulin. Clots milk, and activates trypsinogen.. Its function is as follows. Secreted aspartic endopeptidase that allows assimilation of proteinaceous substrates. The scissile peptide bond is attacked by a nucleophilic water molecule activated by two aspartic residues in the active site. Shows a broad primary substrate specificity. Favors hydrophobic residues at the P1 and P1' positions, but can also activate trypsinogen and hydrolyze the B chain of insulin between positions 'Gly-20' and 'Glu-21'. In Talaromyces stipitatus (strain ATCC 10500 / CBS 375.48 / QM 6759 / NRRL 1006) (Penicillium stipitatum), this protein is Penicillopepsin-1 (pepA).